A 296-amino-acid chain; its full sequence is Ethanolamine ammonia-lyase small subunit (296 aa).

Adenosylcob(III)alamin-binding residues include Val-209 and Glu-230.

It belongs to the EutC family. The basic unit is a heterodimer which dimerizes to form tetramers. The heterotetramers trimerize; 6 large subunits form a core ring with 6 small subunits projecting outwards. The cofactor is adenosylcob(III)alamin.

It localises to the bacterial microcompartment. The catalysed reaction is ethanolamine = acetaldehyde + NH4(+). The protein operates within amine and polyamine degradation; ethanolamine degradation. Catalyzes the deamination of various vicinal amino-alcohols to oxo compounds. Allows this organism to utilize ethanolamine as the sole source of nitrogen and carbon in the presence of external vitamin B12. The chain is Ethanolamine ammonia-lyase small subunit from Lachnoclostridium phytofermentans (strain ATCC 700394 / DSM 18823 / ISDg) (Clostridium phytofermentans).